The sequence spans 201 residues: Interferon-induced transmembrane protein 10 (201 aa).

Disordered stretches follow at residues 1–23 (MAQG…DGTQ) and 60–88 (AAPA…KTDS). The Extracellular segment spans residues 1-127 (MAQGPSQCPA…PDTTEVNDYY (127 aa)). Residues 63 to 73 (APEPSASPPMA) show a composition bias toward pro residues. A helical membrane pass occupies residues 128–148 (LWSIFNFVYLNFCCLGFIALA). 2 S-palmitoyl cysteine lipidation sites follow: Cys140 and Cys141. The Cytoplasmic portion of the chain corresponds to 149–173 (YSLKVRDKKLLNDLNGAVEDAKTAR). Residues 174-194 (LFNITSSALAASCIILIFIFL) form a helical membrane-spanning segment. Over 195 to 201 (RYPLTDY) the chain is Extracellular.

It belongs to the CD225/Dispanin family.

The protein resides in the cell membrane. The sequence is that of Interferon-induced transmembrane protein 10 (Ifitm10) from Mus musculus (Mouse).